The primary structure comprises 538 residues: GSY2-interacting protein PIG2 (538 aa).

4 positions are modified to phosphoserine: Ser-162, Ser-196, Ser-296, and Ser-304. The region spanning Leu-384–Asp-508 is the CBM21 domain.

Its function is as follows. Interacts with glycogen synthase 2 (GSY2); possibly also interacts with phosphatase 1 (GLC7). In Saccharomyces cerevisiae (strain ATCC 204508 / S288c) (Baker's yeast), this protein is GSY2-interacting protein PIG2 (PIG2).